Here is a 449-residue protein sequence, read N- to C-terminus: Tripartite motif-containing protein 64 (449 aa).

The RING-type zinc-finger motif lies at 15–56; it reads CCICVNYFIDPVTIDCGHSFCRPCLCLCSEEGRAPMRCPSCR. The segment at 87-128 adopts a B box-type zinc-finger fold; that stretch reads SSDNICVLHEETKELFCEADKRLLCGPCSESPEHMAHSHSPI. Zn(2+) contacts are provided by Cys92, His95, Cys114, and His120. Residues 189 to 225 are a coiled coil; the sequence is LDEEEQRHLQALEREAEELFQQLQDSQVRMTQHLERM. One can recognise a B30.2/SPRY domain in the interval 269-449; that stretch reads LTSWCITGVL…LRPFFCFGCT (181 aa).

Belongs to the TRIM/RBCC family.

This chain is Tripartite motif-containing protein 64 (TRIM64), found in Homo sapiens (Human).